The sequence spans 408 residues: MAVNLQIPSESEILPVAGVEIGVAEAGIRKAGRRDLTVFRLAPGSAVAGVFTRNRFRAAPVQVCEAHLAQGGPIRALVVNTGNANAGTGAPGLKNAQDTCAALGKLLDVPAEQILPFSTGVILEPLPMDRLTAGLPAAVADLRADGWYGAAHGIMTTDTLPKIHSRRVDIGGKTVTITGISKGAGMIRPNMATMLGFLATDAGIAQPLLRQLAIELADVSFNRITVDGDTSTNDSFILIATGQAGVTVDSAGDAAYAALRDALAAAATDLAQKIVRDAEGATKFMTIRVEEAGNTEEALKVAYAVAHSPLVKTAFFASDPNLGRILAAIGYAGIDDLDVSRLRLWLGDVLVAVDGGRNPDYQEADGQRVMKQAEILVRIALGRGQVADTVYTCDFSHEYVTINADYRS.

Residues Thr-156, Lys-182, Thr-193, Glu-279, Asn-403, and Ser-408 each coordinate substrate. Thr-193 serves as the catalytic Nucleophile.

This sequence belongs to the ArgJ family. As to quaternary structure, heterotetramer of two alpha and two beta chains.

The protein resides in the cytoplasm. It carries out the reaction N(2)-acetyl-L-ornithine + L-glutamate = N-acetyl-L-glutamate + L-ornithine. The catalysed reaction is L-glutamate + acetyl-CoA = N-acetyl-L-glutamate + CoA + H(+). It participates in amino-acid biosynthesis; L-arginine biosynthesis; L-ornithine and N-acetyl-L-glutamate from L-glutamate and N(2)-acetyl-L-ornithine (cyclic): step 1/1. The protein operates within amino-acid biosynthesis; L-arginine biosynthesis; N(2)-acetyl-L-ornithine from L-glutamate: step 1/4. In terms of biological role, catalyzes two activities which are involved in the cyclic version of arginine biosynthesis: the synthesis of N-acetylglutamate from glutamate and acetyl-CoA as the acetyl donor, and of ornithine by transacetylation between N(2)-acetylornithine and glutamate. This is Arginine biosynthesis bifunctional protein ArgJ from Bordetella bronchiseptica (strain ATCC BAA-588 / NCTC 13252 / RB50) (Alcaligenes bronchisepticus).